The chain runs to 334 residues: uncharacterized protein (334 aa).

It belongs to the Gfo/Idh/MocA family.

This is an uncharacterized protein from Rhizobium meliloti (Ensifer meliloti).